The primary structure comprises 182 residues: Large ribosomal subunit protein uL13 (182 aa).

It belongs to the universal ribosomal protein uL13 family. As to quaternary structure, part of the 50S ribosomal subunit.

In terms of biological role, this protein is one of the early assembly proteins of the 50S ribosomal subunit, although it is not seen to bind rRNA by itself. It is important during the early stages of 50S assembly. In Pyrobaculum neutrophilum (strain DSM 2338 / JCM 9278 / NBRC 100436 / V24Sta) (Thermoproteus neutrophilus), this protein is Large ribosomal subunit protein uL13.